We begin with the raw amino-acid sequence, 467 residues long: Glutamate--tRNA ligase (467 aa).

The 'HIGH' region signature appears at 9-19 (PSPTGYLHIGG). Positions 237–241 (KLSKR) match the 'KMSKS' region motif. Position 240 (Lys-240) interacts with ATP.

This sequence belongs to the class-I aminoacyl-tRNA synthetase family. Glutamate--tRNA ligase type 1 subfamily. Monomer.

It localises to the cytoplasm. It carries out the reaction tRNA(Glu) + L-glutamate + ATP = L-glutamyl-tRNA(Glu) + AMP + diphosphate. Catalyzes the attachment of glutamate to tRNA(Glu) in a two-step reaction: glutamate is first activated by ATP to form Glu-AMP and then transferred to the acceptor end of tRNA(Glu). The protein is Glutamate--tRNA ligase of Xylella fastidiosa (strain M12).